The sequence spans 344 residues: Methionine import ATP-binding protein MetN (344 aa).

The 240-residue stretch at 2-241 folds into the ABC transporter domain; sequence IEINQVNKVF…PKTELAHDFI (240 aa). 38–45 contacts ATP; it reads GSSGAGKS.

This sequence belongs to the ABC transporter superfamily. Methionine importer (TC 3.A.1.24) family. The complex is composed of two ATP-binding proteins (MetN), two transmembrane proteins (MetI) and a solute-binding protein (MetQ).

Its subcellular location is the cell inner membrane. The catalysed reaction is L-methionine(out) + ATP + H2O = L-methionine(in) + ADP + phosphate + H(+). It catalyses the reaction D-methionine(out) + ATP + H2O = D-methionine(in) + ADP + phosphate + H(+). Its function is as follows. Part of the ABC transporter complex MetNIQ involved in methionine import. Responsible for energy coupling to the transport system. The chain is Methionine import ATP-binding protein MetN from Vibrio vulnificus (strain CMCP6).